A 401-amino-acid polypeptide reads, in one-letter code: Tryptophan synthase beta chain (401 aa).

N6-(pyridoxal phosphate)lysine is present on Lys-91.

This sequence belongs to the TrpB family. As to quaternary structure, tetramer of two alpha and two beta chains. Pyridoxal 5'-phosphate is required as a cofactor.

It carries out the reaction (1S,2R)-1-C-(indol-3-yl)glycerol 3-phosphate + L-serine = D-glyceraldehyde 3-phosphate + L-tryptophan + H2O. Its pathway is amino-acid biosynthesis; L-tryptophan biosynthesis; L-tryptophan from chorismate: step 5/5. Its function is as follows. The beta subunit is responsible for the synthesis of L-tryptophan from indole and L-serine. The protein is Tryptophan synthase beta chain of Lactococcus lactis subsp. cremoris (strain SK11).